Here is a 124-residue protein sequence, read N- to C-terminus: Tax1-binding protein 3 homolog (124 aa).

The 89-residue stretch at 18–106 (AVELHKQEVI…DRAVKFIKQS (89 aa)) folds into the PDZ domain.

Its function is as follows. May regulate a number of protein-protein interactions by competing for PDZ domain binding sites. This is Tax1-binding protein 3 homolog from Caenorhabditis elegans.